Consider the following 262-residue polypeptide: 3-methyl-2-oxobutanoate hydroxymethyltransferase (262 aa).

Mg(2+)-binding residues include D43 and D82. Residues 43 to 44 (DS), D82, and K110 each bind 3-methyl-2-oxobutanoate. Mg(2+) is bound at residue E112. The active-site Proton acceptor is E179.

The protein belongs to the PanB family. Homodecamer; pentamer of dimers. The cofactor is Mg(2+).

The protein resides in the cytoplasm. The enzyme catalyses 3-methyl-2-oxobutanoate + (6R)-5,10-methylene-5,6,7,8-tetrahydrofolate + H2O = 2-dehydropantoate + (6S)-5,6,7,8-tetrahydrofolate. Its pathway is cofactor biosynthesis; (R)-pantothenate biosynthesis; (R)-pantoate from 3-methyl-2-oxobutanoate: step 1/2. Its function is as follows. Catalyzes the reversible reaction in which hydroxymethyl group from 5,10-methylenetetrahydrofolate is transferred onto alpha-ketoisovalerate to form ketopantoate. In Sodalis glossinidius (strain morsitans), this protein is 3-methyl-2-oxobutanoate hydroxymethyltransferase.